A 351-amino-acid polypeptide reads, in one-letter code: S-adenosylmethionine:tRNA ribosyltransferase-isomerase (351 aa).

The protein belongs to the QueA family. As to quaternary structure, monomer.

The protein resides in the cytoplasm. It catalyses the reaction 7-aminomethyl-7-carbaguanosine(34) in tRNA + S-adenosyl-L-methionine = epoxyqueuosine(34) in tRNA + adenine + L-methionine + 2 H(+). Its pathway is tRNA modification; tRNA-queuosine biosynthesis. In terms of biological role, transfers and isomerizes the ribose moiety from AdoMet to the 7-aminomethyl group of 7-deazaguanine (preQ1-tRNA) to give epoxyqueuosine (oQ-tRNA). This chain is S-adenosylmethionine:tRNA ribosyltransferase-isomerase, found in Sphingopyxis alaskensis (strain DSM 13593 / LMG 18877 / RB2256) (Sphingomonas alaskensis).